Here is a 225-residue protein sequence, read N- to C-terminus: UPF0700 transmembrane protein YoaK (225 aa).

A run of 6 helical transmembrane segments spans residues 10-30 (LLSLLCLTAGIVDVIGYLSLG), 56-76 (VFNSLTALIGFICGVIIATLM), 99-119 (ILFVFACLSFYRAFVPVHILI), 137-157 (GIAGISSTVLTGTLASLLEDI), 174-194 (TVLRALAIILYCVGAIIVALA), and 197-217 (DFYHFIIWVPIVLIFGIMMTA).

The protein belongs to the UPF0700 family.

It localises to the cell membrane. The protein is UPF0700 transmembrane protein YoaK (yoaK) of Bacillus subtilis (strain 168).